The sequence spans 464 residues: Cysteine--tRNA ligase (464 aa).

C29 contacts Zn(2+). The 'HIGH' region motif lies at 31–41 (ATVQGDPHIGH). Residues C207, H232, and E236 each contribute to the Zn(2+) site. The short motif at 263 to 267 (KMSKS) is the 'KMSKS' region element. Residue K266 participates in ATP binding.

It belongs to the class-I aminoacyl-tRNA synthetase family. As to quaternary structure, monomer. It depends on Zn(2+) as a cofactor.

The protein resides in the cytoplasm. The enzyme catalyses tRNA(Cys) + L-cysteine + ATP = L-cysteinyl-tRNA(Cys) + AMP + diphosphate. The polypeptide is Cysteine--tRNA ligase (Rhodococcus jostii (strain RHA1)).